The following is a 337-amino-acid chain: tRNA N6-adenosine threonylcarbamoyltransferase (337 aa).

Fe cation-binding residues include His114 and His118. Residues 136 to 140 (LVSGG), Asp169, Gly182, Asp186, and Asn275 each bind substrate. Asp301 contacts Fe cation.

The protein belongs to the KAE1 / TsaD family. Requires Fe(2+) as cofactor.

The protein resides in the cytoplasm. The enzyme catalyses L-threonylcarbamoyladenylate + adenosine(37) in tRNA = N(6)-L-threonylcarbamoyladenosine(37) in tRNA + AMP + H(+). In terms of biological role, required for the formation of a threonylcarbamoyl group on adenosine at position 37 (t(6)A37) in tRNAs that read codons beginning with adenine. Is involved in the transfer of the threonylcarbamoyl moiety of threonylcarbamoyl-AMP (TC-AMP) to the N6 group of A37, together with TsaE and TsaB. TsaD likely plays a direct catalytic role in this reaction. The chain is tRNA N6-adenosine threonylcarbamoyltransferase from Streptococcus thermophilus (strain ATCC BAA-491 / LMD-9).